A 769-amino-acid polypeptide reads, in one-letter code: Spastin (769 aa).

The tract at residues 1–100 (MVRTKNQSSS…TSGNVPRGGQ (100 aa)) is disordered. Topologically, residues 1–113 (MVRTKNQSSS…KQNLYVVSFP (113 aa)) are cytoplasmic. The interval 1–201 (MVRTKNQSSS…QTLEMAASRG (201 aa)) is required for localization to punctate cytoplasmic foci. Over residues 8 to 19 (SSSSSASSSTKS) the composition is skewed to low complexity. A compositionally biased stretch (gly residues) spans 24–33 (SGGGGGGGGS). Residues 54-63 (SSKLSSNRQR) show a composition bias toward polar residues. Low complexity predominate over residues 64–78 (TTTTITTTTTTPGSS). An intramembrane region (helical) is located at residues 114 to 134 (IIFLFNVLRSLIYQLFCIFRY). Residues 135–769 (LYGASTKVIY…WSQDYGDITI (635 aa)) lie on the Cytoplasmic side of the membrane. The tract at residues 199 to 769 (SRGGTGAGGY…WSQDYGDITI (571 aa)) is sufficient for interaction with microtubules and microtubule severing. The MIT domain occupies 224-299 (HRRAFEYISK…SMARDRLHFL (76 aa)). Residues 314–462 (KEQPKKQLPH…NAASGSGSGA (149 aa)) are disordered. The segment covering 334 to 344 (TTTSSGSSSSS) has biased composition (low complexity). Polar residues-rich tracts occupy residues 395-413 (NKSQ…STSV) and 434-450 (QFSS…RTPI). Low complexity predominate over residues 451–462 (NNNAASGSGSGA). Residues 452-466 (NNAASGSGSGASTPL) are required for interaction with microtubules. 534–541 (GPPGNGKT) is an ATP binding site.

The protein belongs to the AAA ATPase family. Spastin subfamily. Homohexamer. The homohexamer is stabilized by ATP-binding. The homohexamer may adopt a ring conformation through which microtubules pass prior to being severed. Interacts with microtubules. Interacts with atl; may be involved in microtubule dynamics.

The protein localises to the membrane. It is found in the cytoplasm. The protein resides in the cytoskeleton. Its subcellular location is the microtubule organizing center. It localises to the centrosome. The protein localises to the chromosome. It is found in the lipid droplet. It carries out the reaction n ATP + n H2O + a microtubule = n ADP + n phosphate + (n+1) alpha/beta tubulin heterodimers.. Its function is as follows. ATP-dependent microtubule severing protein. Stimulates microtubule minus-end depolymerization and poleward microtubule flux in the mitotic spindle. Regulates microtubule stability in the neuromuscular junction synapse. Involved in lipid metabolism by regulating the size and distribution of lipid droplets. Involved in axon regeneration by regulating microtubule severing. The polypeptide is Spastin (Drosophila virilis (Fruit fly)).